The sequence spans 372 residues: MNNEETFYQAMRRQGVTRRSFLKYCSLAATSLGLGAGMAPKIAWALENKPRIPVVWIHGLECTCCTESFIRSAHPLAKDVILSLISLDYDDTLMAAAGTQAEEVFEDIITQYNGKYILAVEGNPPLGEQGMFCISSGRPFIEKLKRAAAGASAIIAWGTCASWGCVQAARPNPTQATPIDKVITDKPIIKVPGCPPIPDVMSAIITYMVTFDRLPDVDRMGRPLMFYGQRIHDKCYRRAHFDAGEFVQSWDDDAARKGYCLYKMGCKGPTTYNACSSTRWNDGVSFPIQSGHGCLGCAENGFWDRGSFYSRVVDIPQMGTHSTADTVGLTALGVVAAAVGVHAVASAVDQRRRHNQQPTETEHQPGNEDKQA.

A signal peptide (tat-type signal) is located at residues 1-45 (MNNEETFYQAMRRQGVTRRSFLKYCSLAATSLGLGAGMAPKIAWA). Over 46 to 326 (LENKPRIPVV…QMGTHSTADT (281 aa)) the chain is Periplasmic. Residues Cys62, Cys65, Cys160, Cys194, His232, Cys235, Cys260, and Cys266 each contribute to the [4Fe-4S] cluster site. 3 residues coordinate [3Fe-4S] cluster: Cys275, Cys294, and Cys297. The chain crosses the membrane as a helical span at residues 327–347 (VGLTALGVVAAAVGVHAVASA). The segment at 347-372 (AVDQRRRHNQQPTETEHQPGNEDKQA) is disordered. At 348 to 372 (VDQRRRHNQQPTETEHQPGNEDKQA) the chain is on the cytoplasmic side. Over residues 360 to 372 (ETEHQPGNEDKQA) the composition is skewed to basic and acidic residues.

The protein belongs to the [NiFe]/[NiFeSe] hydrogenase small subunit family. In terms of assembly, heterodimer of a large and a small subunit. It depends on [4Fe-4S] cluster as a cofactor. [3Fe-4S] cluster serves as cofactor. In terms of processing, predicted to be exported by the Tat system. The position of the signal peptide cleavage has not been experimentally proven.

It is found in the cell inner membrane. The enzyme catalyses H2 + A = AH2. In terms of biological role, this is one of three E.coli hydrogenases synthesized in response to different physiological conditions. HYD1 is believed to have a role in hydrogen cycling during fermentative growth. This is Hydrogenase-1 small chain (hyaA) from Escherichia coli O6:H1 (strain CFT073 / ATCC 700928 / UPEC).